The chain runs to 292 residues: Small ribosomal subunit protein uS3 (292 aa).

The region spanning 39 to 110 is the KH type-2 domain; the sequence is IRLEIMKFLK…KISIKIKEVK (72 aa). The interval 247–268 is disordered; sequence KANERQSRAALNKKDGLSKDET.

The protein belongs to the universal ribosomal protein uS3 family. In terms of assembly, part of the 30S ribosomal subunit. Forms a tight complex with proteins S10 and S14.

Binds the lower part of the 30S subunit head. Binds mRNA in the 70S ribosome, positioning it for translation. The chain is Small ribosomal subunit protein uS3 from Borrelia garinii subsp. bavariensis (strain ATCC BAA-2496 / DSM 23469 / PBi) (Borreliella bavariensis).